A 184-amino-acid chain; its full sequence is Dual-action ribosomal maturation protein DarP (184 aa).

The interval 1-27 is disordered; sequence MSIPDTEIPVDDDGYDENGYDRPSKSQ. Over residues 8–18 the composition is skewed to acidic residues; sequence IPVDDDGYDEN.

Belongs to the DarP family.

It is found in the cytoplasm. Functionally, member of a network of 50S ribosomal subunit biogenesis factors which assembles along the 30S-50S interface, preventing incorrect 23S rRNA structures from forming. Promotes peptidyl transferase center (PTC) maturation. The protein is Dual-action ribosomal maturation protein DarP of Bordetella avium (strain 197N).